Reading from the N-terminus, the 99-residue chain is NADH-quinone oxidoreductase subunit K (99 aa).

Helical transmembrane passes span 3-23 (PDNY…GVLL), 28-48 (IVMF…FVTF), and 59-79 (VVAF…LAII).

The protein belongs to the complex I subunit 4L family. NDH-1 is composed of 14 different subunits. Subunits NuoA, H, J, K, L, M, N constitute the membrane sector of the complex.

Its subcellular location is the cell membrane. The enzyme catalyses a quinone + NADH + 5 H(+)(in) = a quinol + NAD(+) + 4 H(+)(out). Functionally, NDH-1 shuttles electrons from NADH, via FMN and iron-sulfur (Fe-S) centers, to quinones in the respiratory chain. The immediate electron acceptor for the enzyme in this species is believed to be a menaquinone. Couples the redox reaction to proton translocation (for every two electrons transferred, four hydrogen ions are translocated across the cytoplasmic membrane), and thus conserves the redox energy in a proton gradient. The protein is NADH-quinone oxidoreductase subunit K of Mycolicibacterium gilvum (strain PYR-GCK) (Mycobacterium gilvum (strain PYR-GCK)).